Here is a 594-residue protein sequence, read N- to C-terminus: Grainyhead-like protein 3 homolog (594 aa).

2 transcription activation regions span residues 25–75 (NDDE…RIIT) and 28–91 (EAWS…SCIE). The region spanning 220–453 (ANRDFECTLE…DMETHPVLFI (234 aa)) is the Grh/CP2 DB domain. The tract at residues 483–503 (SSQSFPESFEAPPSKQQTNED) is disordered.

Belongs to the grh/CP2 family. Grainyhead subfamily.

The protein localises to the nucleus. Transcription factor playing important roles in primary neurulation and in the differentiation of stratified epithelia of both ectodermal and endodermal origin. Binds directly to the consensus DNA sequence 5'-AACCGGTT-3' acting as an activator and repressor on distinct target genes. The sequence is that of Grainyhead-like protein 3 homolog (grhl3) from Xenopus tropicalis (Western clawed frog).